A 533-amino-acid chain; its full sequence is E3 ubiquitin-protein ligase arih1l (533 aa).

Disordered stretches follow at residues M1 to D35 and P48 to E73. Residues Q158–N369 are TRIAD supradomain. The Zn(2+) site is built by C162, C165, C179, H181, C184, C187, C207, C212, C252, C257, C273, C275, C280, C283, H288, C293, C320, and C323. Residues C162–C212 form an RING-type 1 zinc finger. The IBR-type zinc finger occupies L232 to C293. The RING-type 2; atypical zinc finger occupies C320–C351. C333 is a catalytic residue. Zn(2+)-binding residues include C338, C343, C348, C351, H358, and C365. A coiled-coil region spans residues K409–N425.

Belongs to the RBR family. Ariadne subfamily.

It localises to the cytoplasm. It carries out the reaction [E2 ubiquitin-conjugating enzyme]-S-ubiquitinyl-L-cysteine + [acceptor protein]-L-lysine = [E2 ubiquitin-conjugating enzyme]-L-cysteine + [acceptor protein]-N(6)-ubiquitinyl-L-lysine.. Its pathway is protein modification; protein ubiquitination. Its function is as follows. E3 ubiquitin-protein ligase, which catalyzes polyubiquitination of target proteins together with ubiquitin-conjugating enzyme E2 ube2l3. In Danio rerio (Zebrafish), this protein is E3 ubiquitin-protein ligase arih1l (arih1l).